The sequence spans 119 residues: Large ribosomal subunit protein uL18 (119 aa).

The protein belongs to the universal ribosomal protein uL18 family. In terms of assembly, part of the 50S ribosomal subunit; part of the 5S rRNA/L5/L18/L25 subcomplex. Contacts the 5S and 23S rRNAs.

Functionally, this is one of the proteins that bind and probably mediate the attachment of the 5S RNA into the large ribosomal subunit, where it forms part of the central protuberance. This chain is Large ribosomal subunit protein uL18, found in Ruegeria sp. (strain TM1040) (Silicibacter sp.).